A 161-amino-acid chain; its full sequence is Large ribosomal subunit protein bL9 (161 aa).

It belongs to the bacterial ribosomal protein bL9 family.

In terms of biological role, binds to the 23S rRNA. The chain is Large ribosomal subunit protein bL9 from Protochlamydia amoebophila (strain UWE25).